The sequence spans 406 residues: Enoyl-[acyl-carrier-protein] reductase [NADH] (406 aa).

NAD(+) contacts are provided by residues 48-53, 74-75, 111-112, and 140-141; these read GASTGF, FE, DA, and IA. Tyrosine 226 serves as a coordination point for substrate. Residue tyrosine 236 is the Proton donor of the active site. Residues lysine 245 and 275–277 each bind NAD(+); that span reads LVT.

This sequence belongs to the TER reductase family. In terms of assembly, monomer.

It catalyses the reaction a 2,3-saturated acyl-[ACP] + NAD(+) = a (2E)-enoyl-[ACP] + NADH + H(+). It functions in the pathway lipid metabolism; fatty acid biosynthesis. Its function is as follows. Involved in the final reduction of the elongation cycle of fatty acid synthesis (FAS II). Catalyzes the reduction of a carbon-carbon double bond in an enoyl moiety that is covalently linked to an acyl carrier protein (ACP). The chain is Enoyl-[acyl-carrier-protein] reductase [NADH] from Coxiella burnetii (strain RSA 331 / Henzerling II).